The sequence spans 65 residues: Disintegrin CC8A (65 aa).

The 65-residue stretch at 1-65 folds into the Disintegrin domain; the sequence is MNSAHPCCDP…SDCPRNRIKK (65 aa). Cystine bridges form between cysteine 7-cysteine 30, cysteine 21-cysteine 27, cysteine 26-cysteine 51, and cysteine 39-cysteine 58. The Cell attachment site signature appears at 43–45; it reads RGD.

Belongs to the disintegrin family. Dimeric disintegrin subfamily. In terms of assembly, heterodimer with CC8B; disulfide-linked. Expressed by the venom gland.

The protein resides in the secreted. Its function is as follows. Inhibits integrins alpha-IIb/beta-3 (ITGA2B/ITGB3), alpha-V/beta-3 (ITGAV/ITGB3), and alpha-5/beta-1 (ITGA5/ITGB1). This Cerastes cerastes (Horned desert viper) protein is Disintegrin CC8A.